Reading from the N-terminus, the 419-residue chain is L-rhamnose isomerase (419 aa).

Mn(2+) contacts are provided by His262, Asp294, and Asp296.

Belongs to the rhamnose isomerase family. As to quaternary structure, homotetramer. Requires Mn(2+) as cofactor.

It localises to the cytoplasm. It carries out the reaction L-rhamnopyranose = L-rhamnulose. The protein operates within carbohydrate degradation; L-rhamnose degradation; glycerone phosphate from L-rhamnose: step 1/3. Its function is as follows. Catalyzes the interconversion of L-rhamnose and L-rhamnulose. The polypeptide is L-rhamnose isomerase (Escherichia coli O139:H28 (strain E24377A / ETEC)).